A 377-amino-acid polypeptide reads, in one-letter code: MFDIELVKKINDWKVSEDGALPICIGCDVGGSGLRVRISSFNDSEKYVDLGHAKAKCTKQLVDVLADLEQKIKQVNDKFVCLGAAIAVAGPIKAGTVILTNWQGEPAVRTLTLKDLPQKIFPKDRSVFLNDLEAGAYGVIAAADKDILEQNFVQLFQDKAPKGPVLANGRTAVLAMGSGLGAALVVRTPLLKNPLVLPTELGHVQIAPNMKEHKNFKQERELIQHISNHYYKGELDPEYEDICSGRGLPLAYQFYHQKKTGELLPVEQIDAGEVAKKAMDGEEDAVDALKAHYIFYLRAAKAIATSLSCESCVLSLDNQVKNHPFVMKIMKELEDEFYEFIRPDWMNGLRVYSQKSILNFNILGTDYMAHAIANKPE.

27–32 contacts ATP; sequence CDVGGS.

The protein belongs to the bacterial glucokinase family.

It catalyses the reaction D-glucose + ATP = D-glucose 6-phosphate + ADP + H(+). In Trichomonas vaginalis, this protein is Probable glucokinase 2 (GK2).